Consider the following 194-residue polypeptide: Large ribosomal subunit protein bL25 (194 aa).

This sequence belongs to the bacterial ribosomal protein bL25 family. CTC subfamily. Part of the 50S ribosomal subunit; part of the 5S rRNA/L5/L18/L25 subcomplex. Contacts the 5S rRNA. Binds to the 5S rRNA independently of L5 and L18.

Functionally, this is one of the proteins that binds to the 5S RNA in the ribosome where it forms part of the central protuberance. This is Large ribosomal subunit protein bL25 from Thermobifida fusca (strain YX).